The chain runs to 206 residues: Potassium channel B446_29190 (206 aa).

Position 1 (Met1) is a topological domain, cytoplasmic. A helical transmembrane segment spans residues 2-25; the sequence is NESGRVEAFSDGVFAIAITLLILD. The short motif at 6 to 12 is the RxxxFSD motif element; it reads RVEAFSD. Over 26-44 the chain is Extracellular; the sequence is IKVPKADGPGGLWHALGAQ. Residues 31–34 form a short helix H1 region; the sequence is ADGP. The short helix H2 stretch occupies residues 36 to 42; it reads GLWHALG. Residues 45–70 traverse the membrane as a helical segment; the sequence is WPSYAAYVVSFLVIGIMWVNHHQVFS. The Cytoplasmic portion of the chain corresponds to 71-76; sequence YVARVD. The helical transmembrane segment at 77–102 threads the bilayer; that stretch reads RALMFLNLLVLMVVAAVPWPTAMLAE. Residues 103–110 are Extracellular-facing; the sequence is YLREDRAS. The chain crosses the membrane as a helical span at residues 111 to 135; that stretch reads HVAAAVYSLVMVAMALAFQALWWHL. At 136–147 the chain is on the cytoplasmic side; sequence TRTGHLFDPRVD. The chain crosses the membrane as a helical span at residues 148 to 174; it reads APAARATRIRFALGSLGYPLTVGLAFV. Topologically, residues 175–176 are extracellular; it reads SA. A helical membrane pass occupies residues 177 to 192; the sequence is PLTLAAHGLLALYYGF. Residues 193 to 206 are Cytoplasmic-facing; it reads NQVPVPTREAAAPS.

It belongs to the TMEM175 family. Homotetramer.

It localises to the membrane. The catalysed reaction is K(+)(in) = K(+)(out). Functionally, potassium channel. In Streptomyces collinus (strain DSM 40733 / Tue 365), this protein is Potassium channel B446_29190.